The sequence spans 109 residues: Large ribosomal subunit protein P1C (109 aa).

Residues 68–83 (ASAPTAAGAGAAAPAE) are compositionally biased toward low complexity. The interval 68–109 (ASAPTAAGAGAAAPAEAAEEEKKEEAKEEEESDEDMGFGLFD) is disordered. The segment covering 94 to 103 (KEEEESDEDM) has biased composition (acidic residues). Position 99 is a phosphoserine (Ser99).

This sequence belongs to the eukaryotic ribosomal protein P1/P2 family. In terms of assembly, component of the large ribosomal subunit (LSU). Mature yeast ribosomes consist of a small (40S) and a large (60S) subunit. The 40S small subunit contains 1 molecule of ribosomal RNA (18S rRNA) and at least 33 different proteins. The large 60S subunit contains 3 rRNA molecules (25S, 5.8S and 5S rRNA) and at least 46 different proteins. The acidic ribosomal P-proteins form the stalk structure of the 60S subunit. They are organized as a pentameric complex in which uL10/P0 interacts with 2 heterodimers of P1 and P2 proteins.

It localises to the cytoplasm. Functionally, component of the ribosome, a large ribonucleoprotein complex responsible for the synthesis of proteins in the cell. The small ribosomal subunit (SSU) binds messenger RNAs (mRNAs) and translates the encoded message by selecting cognate aminoacyl-transfer RNA (tRNA) molecules. The large subunit (LSU) contains the ribosomal catalytic site termed the peptidyl transferase center (PTC), which catalyzes the formation of peptide bonds, thereby polymerizing the amino acids delivered by tRNAs into a polypeptide chain. The nascent polypeptides leave the ribosome through a tunnel in the LSU and interact with protein factors that function in enzymatic processing, targeting, and the membrane insertion of nascent chains at the exit of the ribosomal tunnel. The sequence is that of Large ribosomal subunit protein P1C (rpp103) from Schizosaccharomyces pombe (strain 972 / ATCC 24843) (Fission yeast).